The sequence spans 379 residues: UDP-4-amino-4-deoxy-L-arabinose--oxoglutarate aminotransferase (379 aa).

Residue lysine 182 is modified to N6-(pyridoxal phosphate)lysine.

It belongs to the DegT/DnrJ/EryC1 family. ArnB subfamily. Homodimer. Pyridoxal 5'-phosphate is required as a cofactor.

The enzyme catalyses UDP-4-amino-4-deoxy-beta-L-arabinose + 2-oxoglutarate = UDP-beta-L-threo-pentopyranos-4-ulose + L-glutamate. It participates in nucleotide-sugar biosynthesis; UDP-4-deoxy-4-formamido-beta-L-arabinose biosynthesis; UDP-4-deoxy-4-formamido-beta-L-arabinose from UDP-alpha-D-glucuronate: step 2/3. It functions in the pathway bacterial outer membrane biogenesis; lipopolysaccharide biosynthesis. In terms of biological role, catalyzes the conversion of UDP-4-keto-arabinose (UDP-Ara4O) to UDP-4-amino-4-deoxy-L-arabinose (UDP-L-Ara4N). The modified arabinose is attached to lipid A and is required for resistance to polymyxin and cationic antimicrobial peptides. This chain is UDP-4-amino-4-deoxy-L-arabinose--oxoglutarate aminotransferase, found in Salmonella dublin (strain CT_02021853).